Reading from the N-terminus, the 777-residue chain is MKFGKIFKKQMVPEWVEAYVDYNGLKRVLKEIRSYKHSKLTRAASRVSQQAEALHRSFSGLSFHPRHSERAGDIEDQVIKVDTVQEEGSRKLYETKFLKKSEEGGEFEESFFKKLDENLNKVNKFYRDKVKEVIEEAALLDKQMDALIALRVKMQKPDVDNLNLEKHPSDKVVVDTSDNTMRTQGTANTDMVHGIERTNIPEEEASHIMADIVPVSHTNGDEEEASIGDKQDLREILERVKMNDVLESPITTLKGVFGDSNEPISKKGLKKGEEQLRLVFSEFYQKLRRLKEYSFMNLLAFSKIMKKYEKIASRNASRNYMKIVDNSLIGSSDEVNRLLERVEVTFVKHFSSGNRREGMKCLRPKVKRERHRVTFFSGFFSGCSIALVIAVVFKIESRKIMEKNYGTEYMANIIPLYSLFGFIILHMLMYSANIYFWKRYRVNYTFIFGFKQGTELGDREVFLVSTGLAVLAFVCFLLNLQLDMDWRMKHHKTLPEVIPLCLATIVLFILFCPFNIIYRSSRFFFIRSLFHCICAPLYEVTLPDFFLGDHLTSQIQAIRSFELFICYYGLGEYLQRQNKCHSHGVYNAFYFVVAVIPYWLRFLQCIRRLCEEKESVHGYNALKYMLTIIAVIVRTAYELKKGRTWMILALVSSGVATGMNTFWDIVIDWGLLRKHSKNPYLRDKLLVPHKSVYFAAMVVNVILRVAWMQLVLEFNLKSLHKIAVTSIISCLEIIRRGIWSFFRLENEHLNNVGKYRAFKSVPHPFHYYDDDDVDKDD.

An SPX domain is found at 1–322 (MKFGKIFKKQ…SRNASRNYMK (322 aa)). Over 1 to 372 (MKFGKIFKKQ…RPKVKRERHR (372 aa)) the chain is Cytoplasmic. A helical membrane pass occupies residues 373-393 (VTFFSGFFSGCSIALVIAVVF). The Extracellular portion of the chain corresponds to 394 to 408 (KIESRKIMEKNYGTE). The helical transmembrane segment at 409–429 (YMANIIPLYSLFGFIILHMLM) threads the bilayer. At 430–459 (YSANIYFWKRYRVNYTFIFGFKQGTELGDR) the chain is on the cytoplasmic side. A helical transmembrane segment spans residues 460–480 (EVFLVSTGLAVLAFVCFLLNL). Residues 481–496 (QLDMDWRMKHHKTLPE) lie on the Extracellular side of the membrane. Residues 497-517 (VIPLCLATIVLFILFCPFNII) traverse the membrane as a helical segment. Residues 518 to 646 (YRSSRFFFIR…YELKKGRTWM (129 aa)) lie on the Cytoplasmic side of the membrane. Residues 581-775 (HSHGVYNAFY…HYYDDDDVDK (195 aa)) enclose the EXS domain. Residues 647–667 (ILALVSSGVATGMNTFWDIVI) traverse the membrane as a helical segment. Residues 668–691 (DWGLLRKHSKNPYLRDKLLVPHKS) lie on the Extracellular side of the membrane. The chain crosses the membrane as a helical span at residues 692–712 (VYFAAMVVNVILRVAWMQLVL). Residues 713 to 777 (EFNLKSLHKI…YDDDDVDKDD (65 aa)) are Cytoplasmic-facing.

The protein belongs to the SYG1 (TC 2.A.94) family. As to expression, expressed in root epidermis and cortex, leaf blades and hydathodes, stems and flowers.

The protein localises to the cell membrane. May transport inorganic phosphate (Pi). This is Phosphate transporter PHO1 homolog 10 (PHO1-H10) from Arabidopsis thaliana (Mouse-ear cress).